The following is a 424-amino-acid chain: Cyclin-dependent kinase D-1 (424 aa).

One can recognise a Protein kinase domain in the interval 19-299 (YLKREVLGEG…AQQALEHRYF (281 aa)). ATP is bound by residues 25–33 (LGEGTYGVV) and lysine 48. Threonine 29 carries the phosphothreonine modification. Tyrosine 30 is modified (phosphotyrosine). The active-site Proton acceptor is aspartate 141. A Phosphoserine modification is found at serine 168. A Phosphothreonine modification is found at threonine 174. Disordered stretches follow at residues 303–337 (PAPT…PVVL) and 359–424 (ADRT…GYTE). Basic and acidic residues predominate over residues 359–374 (ADRTEEHPSGARHMDD).

It belongs to the protein kinase superfamily. CMGC Ser/Thr protein kinase family. CDC2/CDKX subfamily. Interacts with CYCH1-1. Expressed in actively dividing cells of roots, leaves and shoots. Expressed in the intercalary meristem and the elongation zone of internodes.

The protein localises to the nucleus. It carries out the reaction L-seryl-[protein] + ATP = O-phospho-L-seryl-[protein] + ADP + H(+). It catalyses the reaction L-threonyl-[protein] + ATP = O-phospho-L-threonyl-[protein] + ADP + H(+). The enzyme catalyses [DNA-directed RNA polymerase] + ATP = phospho-[DNA-directed RNA polymerase] + ADP + H(+). In terms of biological role, CDK-activating kinase that may control G1/S phase progression. May control the rate of cell differentiation to accomplish proper development of organs, or in response to a changing environment. Forms a complex with cyclin CYCH1-1 that phosphorylates CDKA-1 and the C-terminal domain (CTD) of the large subunit of RNA polymerase II. This chain is Cyclin-dependent kinase D-1 (CDKD-1), found in Oryza sativa subsp. japonica (Rice).